The chain runs to 187 residues: Accessory gene regulator protein B (187 aa).

A run of 5 helical transmembrane segments spans residues 49–69 (IAYI…FYLI), 82–102 (FWCY…VLHF), 107–127 (TLMM…APAA), 143–163 (YFSI…KEPY), and 164–184 (TQFI…IYYS).

This sequence belongs to the AgrB family.

It localises to the cell membrane. In terms of biological role, essential for the production of a quorum sensing system signal molecule, the autoinducing peptide (AIP). This quorum sensing system is responsible for the regulation of the expression of virulence factor genes. Involved in the proteolytic processing of AgrD, the precursor of AIP. The protein is Accessory gene regulator protein B of Staphylococcus aureus (strain MW2).